An 83-amino-acid chain; its full sequence is ATP synthase subunit c, chloroplastic (83 aa).

A run of 2 helical transmembrane segments spans residues 4–24 and 57–77; these read IISA…AIGP and LAFM…LLFA.

It belongs to the ATPase C chain family. F-type ATPases have 2 components, F(1) - the catalytic core - and F(0) - the membrane proton channel. F(1) has five subunits: alpha(3), beta(3), gamma(1), delta(1), epsilon(1). F(0) has four main subunits: a(1), b(1), b'(1) and c(10-14). The alpha and beta chains form an alternating ring which encloses part of the gamma chain. F(1) is attached to F(0) by a central stalk formed by the gamma and epsilon chains, while a peripheral stalk is formed by the delta, b and b' chains.

Its subcellular location is the plastid. The protein localises to the chloroplast thylakoid membrane. F(1)F(0) ATP synthase produces ATP from ADP in the presence of a proton or sodium gradient. F-type ATPases consist of two structural domains, F(1) containing the extramembraneous catalytic core and F(0) containing the membrane proton channel, linked together by a central stalk and a peripheral stalk. During catalysis, ATP synthesis in the catalytic domain of F(1) is coupled via a rotary mechanism of the central stalk subunits to proton translocation. In terms of biological role, key component of the F(0) channel; it plays a direct role in translocation across the membrane. A homomeric c-ring of between 10-14 subunits forms the central stalk rotor element with the F(1) delta and epsilon subunits. In Galdieria sulphuraria (Red alga), this protein is ATP synthase subunit c, chloroplastic.